The sequence spans 476 residues: Glycogen synthase (476 aa).

Residue K15 participates in ADP-alpha-D-glucose binding.

This sequence belongs to the glycosyltransferase 1 family. Bacterial/plant glycogen synthase subfamily.

The enzyme catalyses [(1-&gt;4)-alpha-D-glucosyl](n) + ADP-alpha-D-glucose = [(1-&gt;4)-alpha-D-glucosyl](n+1) + ADP + H(+). The protein operates within glycan biosynthesis; glycogen biosynthesis. In terms of biological role, synthesizes alpha-1,4-glucan chains using ADP-glucose. The chain is Glycogen synthase from Haemophilus influenzae (strain 86-028NP).